We begin with the raw amino-acid sequence, 223 residues long: Thymidine kinase (223 aa).

ATP-binding positions include 19 to 26 and 96 to 99; these read GPMFAGKT and DEVQ. The Proton acceptor role is filled by glutamate 97. Zn(2+) is bound by residues cysteine 153, cysteine 156, cysteine 191, and histidine 194.

It belongs to the thymidine kinase family. In terms of assembly, homotetramer.

The protein resides in the cytoplasm. It carries out the reaction thymidine + ATP = dTMP + ADP + H(+). The polypeptide is Thymidine kinase (Ureaplasma parvum serovar 3 (strain ATCC 27815 / 27 / NCTC 11736)).